The sequence spans 492 residues: Target of Myb1 membrane trafficking protein (492 aa).

Position 1 is an N-acetylmethionine (methionine 1). Residue serine 11 is modified to Phosphoserine. The region spanning 20–152 (ATDGSLQSED…DLRRKGLEFP (133 aa)) is the VHS domain. A KRKK motif is present at residues 48–56 (KDAFRAVKK). Serine 160 carries the post-translational modification Phosphoserine. The residue at position 164 (threonine 164) is a Phosphothreonine. The segment covering 167-195 (RTVFNSETPSRQNSVSSNTSQRGDLSQHA) has biased composition (polar residues). The interval 167-215 (RTVFNSETPSRQNSVSSNTSQRGDLSQHATPLPTPAVLPGDSPITPTPE) is disordered. Phosphoserine is present on residues serine 176, serine 180, and serine 208. Residues 215-303 (EQIGKLRSEL…VFLRHERFER (89 aa)) form the GAT domain. The tract at residues 321–326 (DLIDMG) is clathrin box. Phosphoserine occurs at positions 355 and 376. Residue lysine 385 forms a Glycyl lysine isopeptide (Lys-Gly) (interchain with G-Cter in SUMO2) linkage. Residues 392 to 463 (TDGLAGALDA…ADRLPNLASP (72 aa)) are interaction with MYO6. The segment at 450–492 (RAKAADRLPNLASPSAEGPPRPSPGTAPRRKTQEKDDDMLFAL) is disordered. A Phosphoserine modification is found at serine 462.

Belongs to the TOM1 family. In terms of assembly, found in a complex with TOLLIP; interacts (via GAT domain) with TOLLIP (via N-terminus); the interactions leads to TOM1-recruitment to endosomes and inhibition of TOLLIP binding to PtdIns(3)P. Interacts (via GAT domain and the C-terminal part of the VHS domain) with UBC/ubiquitin. Interacts (via clathrin box and C-terminus) with clathrin heavy chain. Interacts with MYO6. Interacts with TAX1BP1; CALCOCO2/NDP52 and OPTN; the interaction is indirect and is mediated by MYO6, which acts as a bridge between TOM1 and the three autophagy receptors. Interacts (via C-terminus) with ZFYVE16 (via C-terminus); interaction is required to target TOM1 and clathrin to endosomes. Interacts with LRBA. Monoubiquitinated. As to expression, ubiquitous. In adult brain, it is highly expressed at the mesencephalic level, in the hippocampal formation and medial lemniscus. In cerebellum, it is highly expressed in Purkinje cells and granular layers.

Its subcellular location is the cytoplasm. The protein localises to the endosome membrane. It localises to the early endosome membrane. Adapter protein that plays a role in the intracellular membrane trafficking of ubiquitinated proteins, thereby participating in autophagy, ubiquitination-dependent signaling and receptor recycling pathways. Acts as a MYO6/Myosin VI adapter protein that targets MYO6 to endocytic structures. Together with MYO6, required for autophagosomal delivery of endocytic cargo, the maturation of autophagosomes and their fusion with lysosomes. MYO6 links TOM1 with autophagy receptors, such as TAX1BP1; CALCOCO2/NDP52 and OPTN. Binds to polyubiquitinated proteins via its GAT domain. In a complex with TOLLIP, recruits ubiquitin-conjugated proteins onto early endosomes. The Tom1-Tollip complex may regulate endosomal trafficking by linking polyubiquitinated proteins to clathrin. Mediates clathrin recruitment to early endosomes by ZFYVE16. Modulates binding of TOLLIP to phosphatidylinositol 3-phosphate (PtdIns(3)P) via binding competition; the association with TOLLIP may favor the release of TOLLIP from endosomal membranes, allowing TOLLIP to commit to cargo trafficking. Acts as a phosphatidylinositol 5-phosphate (PtdIns(5)P) effector by binding to PtdIns(5)P, thereby regulating endosomal maturation. PtdIns(5)P-dependent recruitment to signaling endosomes may block endosomal maturation. Also inhibits Toll-like receptor (TLR) signaling and participates in immune receptor recycling. This Mus musculus (Mouse) protein is Target of Myb1 membrane trafficking protein.